We begin with the raw amino-acid sequence, 225 residues long: UPF0758 protein SZO_09140 (225 aa).

One can recognise an MPN domain in the interval 102-224 (PVLSSAQVAE…YYSFREKSDL (123 aa)). Residues His173, His175, and Asp186 each contribute to the Zn(2+) site. Residues 173 to 186 (HNHPSGLTKPSAND) carry the JAMM motif motif.

Belongs to the UPF0758 family.

This Streptococcus equi subsp. zooepidemicus (strain H70) protein is UPF0758 protein SZO_09140.